A 443-amino-acid polypeptide reads, in one-letter code: Xaa-Pro dipeptidase (443 aa).

The Mn(2+) site is built by aspartate 248, aspartate 259, histidine 339, glutamate 384, and glutamate 423.

Belongs to the peptidase M24B family. Bacterial-type prolidase subfamily. The cofactor is Mn(2+).

It carries out the reaction Xaa-L-Pro dipeptide + H2O = an L-alpha-amino acid + L-proline. Its function is as follows. Splits dipeptides with a prolyl residue in the C-terminal position. The sequence is that of Xaa-Pro dipeptidase from Colwellia psychrerythraea (strain 34H / ATCC BAA-681) (Vibrio psychroerythus).